Consider the following 1050-residue polypeptide: Self-sufficient cytochrome P450 monooxygenase CYP505E5 (1050 aa).

C405 is a binding site for heme. A disordered region spans residues 467 to 491; the sequence is RRSMLVARDGSSGESSNHLAEARGD. Residues 500–641 enclose the Flavodoxin-like domain; the sequence is VSFFYGSNSG…DLEAWEETSL (142 aa). Residues 506–510 and 585–617 contribute to the FMN site; these read SNSGT and VFGC…TRLA. The FAD-binding FR-type domain maps to 679–907; that stretch reads KGLIEAKVTA…RPAKESFHLP (229 aa).

In the N-terminal section; belongs to the cytochrome P450 family. Requires FAD as cofactor. It depends on FMN as a cofactor. The cofactor is heme.

The catalysed reaction is 2 oxidized [cytochrome P450] + NADPH = 2 reduced [cytochrome P450] + NADP(+) + H(+). It carries out the reaction an organic molecule + reduced [NADPH--hemoprotein reductase] + O2 = an alcohol + oxidized [NADPH--hemoprotein reductase] + H2O + H(+). The enzyme catalyses dodecanoate + reduced [NADPH--hemoprotein reductase] + O2 = 5-hydroxydodecanoate + oxidized [NADPH--hemoprotein reductase] + H2O + H(+). It catalyses the reaction tetradecanoate + reduced [NADPH--hemoprotein reductase] + O2 = 7-hydroxytetradecanoate + oxidized [NADPH--hemoprotein reductase] + H2O + H(+). The catalysed reaction is dodecan-1-ol + reduced [NADPH--hemoprotein reductase] + O2 = 1,5-dodecanediol + oxidized [NADPH--hemoprotein reductase] + H2O + H(+). It carries out the reaction dodecan-1-ol + reduced [NADPH--hemoprotein reductase] + O2 = 1,4-dodecanediol + oxidized [NADPH--hemoprotein reductase] + H2O + H(+). The enzyme catalyses dodecan-1-ol + reduced [NADPH--hemoprotein reductase] + O2 = 1,6-dodecanediol + oxidized [NADPH--hemoprotein reductase] + H2O + H(+). Its function is as follows. Self-sufficient cytochrome P450 monooxygenase that catalyzes the regioselective in-chain hydroxylation of alkanes, fatty alcohols, and fatty acids at the omega-7 position. Performs hydroxylation of C10-C16 n-alkanes and C12 and C14 fatty alcohols; and thereby enables the one step biocatalytic synthesis of rare alcohols such as 5-dodecanol and 7-tetradecanol. Converts 1-dodecanol into 1,5-dodecanediol as major product with very little sub-terminally hydroxylated products with the 1,4-dodecanediol and 1,6-dodecanediol more abundant. Converts dodecanoic acid to 5-hydroxydodecanoic acid which can be further converted into delta-dodecalactone by lactonization of the 5-hydroxy acid at low pH. Also gives sub-terminal hydroxylation of dodecanoic acid with 9-hydroxydodecanoic acid being the second most abundant product. This is Self-sufficient cytochrome P450 monooxygenase CYP505E5 from Aspergillus niger.